The sequence spans 355 residues: Lipoyl synthase (355 aa).

The RPE1 insert domain maps to 7–55 (HLSKFAYREEFAGNTEVLATAAYKEDCADASTGLTPKLPLEVEFGKMSK). Residues C86, C91, C97, C112, C116, C119, and S325 each coordinate [4Fe-4S] cluster. The region spanning 98-314 (WSKKHATVMI…ERVARTKGFL (217 aa)) is the Radical SAM core domain.

It belongs to the radical SAM superfamily. Lipoyl synthase family. It depends on [4Fe-4S] cluster as a cofactor.

Its subcellular location is the cytoplasm. The enzyme catalyses [[Fe-S] cluster scaffold protein carrying a second [4Fe-4S](2+) cluster] + N(6)-octanoyl-L-lysyl-[protein] + 2 oxidized [2Fe-2S]-[ferredoxin] + 2 S-adenosyl-L-methionine + 4 H(+) = [[Fe-S] cluster scaffold protein] + N(6)-[(R)-dihydrolipoyl]-L-lysyl-[protein] + 4 Fe(3+) + 2 hydrogen sulfide + 2 5'-deoxyadenosine + 2 L-methionine + 2 reduced [2Fe-2S]-[ferredoxin]. Its pathway is protein modification; protein lipoylation via endogenous pathway; protein N(6)-(lipoyl)lysine from octanoyl-[acyl-carrier-protein]: step 2/2. In terms of biological role, catalyzes the radical-mediated insertion of two sulfur atoms into the C-6 and C-8 positions of the octanoyl moiety bound to the lipoyl domains of lipoate-dependent enzymes, thereby converting the octanoylated domains into lipoylated derivatives. The chain is Lipoyl synthase from Rickettsia bellii (strain RML369-C).